Here is a 708-residue protein sequence, read N- to C-terminus: Ion-translocating oxidoreductase complex subunit C (708 aa).

4Fe-4S ferredoxin-type domains follow at residues Gly369–Tyr397 and Lys407–Phe436. Residues Cys377, Cys380, Cys383, Cys387, Cys416, Cys419, Cys422, and Cys426 each coordinate [4Fe-4S] cluster. Positions Ala630–Pro682 are disordered.

This sequence belongs to the 4Fe4S bacterial-type ferredoxin family. RnfC subfamily. In terms of assembly, the complex is composed of six subunits: RsxA, RsxB, RsxC, RsxD, RsxE and RsxG. It depends on [4Fe-4S] cluster as a cofactor.

The protein localises to the cell inner membrane. Its function is as follows. Part of a membrane-bound complex that couples electron transfer with translocation of ions across the membrane. Required to maintain the reduced state of SoxR. This is Ion-translocating oxidoreductase complex subunit C from Escherichia coli O1:K1 / APEC.